Here is a 492-residue protein sequence, read N- to C-terminus: Dipeptide permease D (492 aa).

13 helical membrane passes run Val-14–Leu-34, Ala-49–Ala-69, Leu-91–Val-111, Gly-138–Cys-158, Trp-167–Cys-187, Asn-212–Trp-232, Ser-236–Leu-256, Leu-269–Ser-289, Met-312–Val-332, Ile-344–Leu-364, Leu-379–Met-399, Val-413–Ile-433, and Val-458–Leu-478.

This sequence belongs to the major facilitator superfamily. Proton-dependent oligopeptide transporter (POT/PTR) (TC 2.A.17) family. DtpD subfamily.

Its subcellular location is the cell inner membrane. Probable proton-dependent permease that transports dipeptides. In Klebsiella pneumoniae subsp. pneumoniae (strain ATCC 700721 / MGH 78578), this protein is Dipeptide permease D.